The chain runs to 369 residues: Putative transport protein YueF (369 aa).

8 helical membrane passes run 13–33 (ILFV…FQPF), 34–54 (IVFI…YFIF), 73–93 (LIYL…GPII), 159–179 (AVFG…FILF), 213–233 (DTLA…GTAC), 234–254 (FIGY…VMAI), 271–291 (VIVG…VVVI), and 316–336 (IILL…ILAV).

It belongs to the autoinducer-2 exporter (AI-2E) (TC 2.A.86) family.

It localises to the cell membrane. This Bacillus subtilis (strain 168) protein is Putative transport protein YueF (yueF).